We begin with the raw amino-acid sequence, 380 residues long: Crotonobetainyl-CoA reductase (380 aa).

This sequence belongs to the acyl-CoA dehydrogenase family. Homotetramer. The cofactor is FAD.

Its subcellular location is the cytoplasm. It carries out the reaction 4-(trimethylamino)butanoyl-CoA + oxidized [electron-transfer flavoprotein] + H(+) = crotonobetainyl-CoA + reduced [electron-transfer flavoprotein]. It participates in amine and polyamine metabolism; carnitine metabolism. In terms of biological role, catalyzes the reduction of crotonobetainyl-CoA to gamma-butyrobetainyl-CoA. The sequence is that of Crotonobetainyl-CoA reductase from Shigella flexneri serotype 5b (strain 8401).